Here is a 1648-residue protein sequence, read N- to C-terminus: Homeostatic regulator of DAG (1648 aa).

The DMAP1-binding domain occupies 5–101 (IPPTLPLDLQ…YRVTTINSTS (97 aa)). N-linked (GlcNAc...) asparagine glycans are attached at residues Asn28, Asn71, and Asn98. 2 disordered regions span residues 52-73 (PYTP…RNTS) and 96-130 (TINS…ENGS). Residues 60–71 (NSRKSKHLHRRN) show a composition bias toward basic residues. Polar residues-rich tracts occupy residues 96-105 (TINSTSANNT) and 113-128 (YTAS…SDEN). Ser99 is subject to Phosphoserine. Residues Asn128, Asn151, and Asn209 are each glycosylated (N-linked (GlcNAc...) asparagine). Positions 158–893 (AMTDSLPLIL…VEKKFLNNDL (736 aa)) are fatty acyl-AMP ligase-like domain 1. A helical membrane pass occupies residues 228 to 248 (VIEFTIALLGCFISGMAAVPV). N-linked (GlcNAc...) asparagine glycans are attached at residues Asn288, Asn328, Asn575, Asn644, and Asn730. Ser751 carries the post-translational modification Phosphoserine. Asn881, Asn917, Asn995, and Asn1009 each carry an N-linked (GlcNAc...) asparagine glycan. The fatty acyl-AMP ligase-like domain 2 stretch occupies residues 950 to 1648 (VKPKLALQCS…LLSDYEKDNI (699 aa)). Residues 1061 to 1081 (YVAMIMACLYCNLLVIPLPSV) form a helical membrane-spanning segment. Asn1198 carries an N-linked (GlcNAc...) asparagine glycan. A helical membrane pass occupies residues 1224–1244 (GLGFMFSCLLGIYTGASTCLF). N-linked (GlcNAc...) asparagine glycans are attached at residues Asn1301, Asn1302, Asn1447, Asn1472, Asn1488, Asn1565, Asn1597, and Asn1634.

It localises to the vacuole membrane. The protein localises to the mitochondrion membrane. Homeostatic regulator of a chemically distinct subset of diacylglycerols (DAGs) with C36 chain length that prevents the toxic accumulation of these specific DAGs in the logarithmic growth phase, which otherwise leads to endoplasmic reticulum stress. Maintains the basal level of DAG subspecies by directly facilitating DAG to triacylglycerol (TAG) conversion process, possibly via adenylation activity of its FLD domains. Does not affect the abundant DAG species (representing over 90% of total DAG pool), comprised of C32 and C34 chain lengths. Required for vacuole fusion-mediated osmoadaptation. This Saccharomyces cerevisiae (strain ATCC 204508 / S288c) (Baker's yeast) protein is Homeostatic regulator of DAG.